The chain runs to 88 residues: Small ribosomal subunit protein uS17 (88 aa).

The protein belongs to the universal ribosomal protein uS17 family. Part of the 30S ribosomal subunit.

Functionally, one of the primary rRNA binding proteins, it binds specifically to the 5'-end of 16S ribosomal RNA. In Teredinibacter turnerae (strain ATCC 39867 / T7901), this protein is Small ribosomal subunit protein uS17.